The following is a 232-amino-acid chain: Sugar fermentation stimulation protein homolog (232 aa).

Belongs to the SfsA family.

This Acidithiobacillus ferrooxidans (strain ATCC 23270 / DSM 14882 / CIP 104768 / NCIMB 8455) (Ferrobacillus ferrooxidans (strain ATCC 23270)) protein is Sugar fermentation stimulation protein homolog.